Here is a 559-residue protein sequence, read N- to C-terminus: Urocanate hydratase (559 aa).

Residues 53 to 54 (GG), Gln131, 177 to 179 (GMG), Glu197, Arg202, 243 to 244 (NA), 264 to 268 (QTSAH), 274 to 275 (YL), and Tyr323 each bind NAD(+). The active site involves Cys411. Residue Gly493 participates in NAD(+) binding.

It belongs to the urocanase family. Requires NAD(+) as cofactor.

It localises to the cytoplasm. It catalyses the reaction 4-imidazolone-5-propanoate = trans-urocanate + H2O. The protein operates within amino-acid degradation; L-histidine degradation into L-glutamate; N-formimidoyl-L-glutamate from L-histidine: step 2/3. Its function is as follows. Catalyzes the conversion of urocanate to 4-imidazolone-5-propionate. The chain is Urocanate hydratase from Pseudomonas paraeruginosa (strain DSM 24068 / PA7) (Pseudomonas aeruginosa (strain PA7)).